A 404-amino-acid chain; its full sequence is Spore germination protein YndF (404 aa).

An N-terminal signal peptide occupies residues 1–24 (MKSKLKRQLPAMVIVCLLMICVTG). Cysteine 25 carries N-palmitoyl cysteine lipidation. The S-diacylglycerol cysteine moiety is linked to residue cysteine 25.

This sequence belongs to the GerABKC lipoprotein family.

It localises to the cell membrane. Functionally, may be involved in spore germination. The polypeptide is Spore germination protein YndF (yndF) (Bacillus subtilis (strain 168)).